A 110-amino-acid chain; its full sequence is Large ribosomal subunit protein eL30 (110 aa).

This sequence belongs to the eukaryotic ribosomal protein eL30 family.

In Methanocaldococcus jannaschii (strain ATCC 43067 / DSM 2661 / JAL-1 / JCM 10045 / NBRC 100440) (Methanococcus jannaschii), this protein is Large ribosomal subunit protein eL30 (rpl30e).